Consider the following 249-residue polypeptide: tRNA pseudouridine synthase A (249 aa).

The active-site Nucleophile is aspartate 53. Tyrosine 111 contacts substrate.

This sequence belongs to the tRNA pseudouridine synthase TruA family. As to quaternary structure, homodimer.

It carries out the reaction uridine(38/39/40) in tRNA = pseudouridine(38/39/40) in tRNA. Its function is as follows. Formation of pseudouridine at positions 38, 39 and 40 in the anticodon stem and loop of transfer RNAs. This chain is tRNA pseudouridine synthase A, found in Streptococcus pyogenes serotype M1.